Consider the following 527-residue polypeptide: Acyl-coenzyme A thioesterase 4, mitochondrial (527 aa).

A mitochondrion-targeting transit peptide spans 1–75 (MMTPIGIRIR…FLFDPPPIRF (75 aa)). HotDog ACOT-type domains are found at residues 172–294 (ILYN…RDSK) and 370–487 (KDTC…GPEA).

The protein belongs to the acyl coenzyme A hydrolase family. In terms of tissue distribution, mostly expressed at low levels in glandular trichomes (lupulin glands), and, to a lower extent, in stems, leaves, flowers and cones.

Its subcellular location is the mitochondrion. It carries out the reaction 2-methylpropanoyl-CoA + H2O = 2-methylpropanoate + CoA + H(+). It catalyses the reaction propanoyl-CoA + H2O = propanoate + CoA + H(+). The catalysed reaction is octanoyl-CoA + H2O = octanoate + CoA + H(+). The enzyme catalyses butanoyl-CoA + H2O = butanoate + CoA + H(+). It carries out the reaction 3-methylbutanoyl-CoA + H2O = 3-methylbutanoate + CoA + H(+). It catalyses the reaction 2-methylbutanoyl-CoA + H2O = 2-methylbutanoate + CoA + H(+). Its function is as follows. Acyl-CoA thioesterases are a group of enzymes that catalyze the hydrolysis of acyl-CoAs to the free fatty acid and coenzyme A (CoASH), providing the potential to regulate intracellular levels of acyl-CoAs, free fatty acids and CoASH. Active on acyl CoAs with short chains (propanoyl-CoA and butanoyl-CoA), branched short chains (2-methylpropanoyl-CoA, 2-methylbutanoyl-CoA and 3-methylbutanoyl-CoA) and medium chains (octanoyl-CoA). This Humulus lupulus (European hop) protein is Acyl-coenzyme A thioesterase 4, mitochondrial.